The chain runs to 667 residues: Cylicin-1 (667 aa).

Disordered regions lie at residues 121 to 251 and 275 to 634; these read PYTH…SSNV and SQNN…ILPS. Basic and acidic residues predominate over residues 129-172; it reads KKAESKKYKDDKKETALKKISKKDTGPHEVDEKPKRRNKADKTP. Positions 173 to 182 are enriched in low complexity; the sequence is SKSSHGSQLS. The segment covering 187 to 197 has biased composition (basic and acidic residues); sequence SKSETNPESKD. Residues 223-237 are compositionally biased toward low complexity; that stretch reads STSTKKYSKSSKNNS. Over residues 238–251 the composition is skewed to polar residues; that stretch reads DAVSETCSKNSSNV. Composition is skewed to basic and acidic residues over residues 284 to 326, 345 to 371, 380 to 394, 417 to 431, 438 to 464, 483 to 506, 521 to 533, 549 to 558, and 583 to 593; these read KKDA…KDTE, SKKD…DAKK, SKKD…KDAE, GDSK…KDAV, SKKD…KEST, SKKD…KKAT, KKTEMFKSSD, and DSKKDAVEPKR. 9 tandem repeats follow at residues 287–305, 306–337, 338–368, 369–405, 406–442, 443–475, 476–516, 517–547, and 548–569. Residues 287–569 form a 9 X approximate tandem repeats region; sequence AKKDAKGKGS…ESEESLFKPG (283 aa). Residues 624–633 show a composition bias toward pro residues; that stretch reads PLPPCEPILP.

In terms of assembly, interacts with proteins of spermatozoa head including ACTL7A, CCIN, FAM209A and SPACA1; the interactions may be necessary for proper acrosome attachment to the nuclear envelope. In terms of tissue distribution, testis.

It localises to the cytoplasm. Its subcellular location is the cytoskeleton. It is found in the perinuclear theca. The protein localises to the calyx. In terms of biological role, plays a role in the establishment of normal sperm morphology during spermatogenesis and is required for acrosome attachment to the nuclear envelope. The polypeptide is Cylicin-1 (CYLC1) (Bos taurus (Bovine)).